The chain runs to 236 residues: Probable pseudouridine-5'-phosphatase YKL033W-A (236 aa).

It belongs to the HAD-like hydrolase superfamily.

It carries out the reaction XMP + H2O = xanthosine + phosphate. It catalyses the reaction psi-UMP + H2O = pseudouridine + phosphate. Its function is as follows. Nucleotidase with XMP as the best in vitro substrate. Low catalytic efficiencies of YKL033W-A observed with XMP and other substrates suggest that these could be secondary activities for this protein, and its primary substrate is not yet identified. May possess pseudouridine 5'-phosphatase activity and together with dTTP/UTP pyrophosphatase YOR111W might constitute a pathway for the detoxification of pseudouridine 5'-triphosphate (Psi-UTP) and -monophosphate (Psi-UMP). The sequence is that of Probable pseudouridine-5'-phosphatase YKL033W-A from Saccharomyces cerevisiae (strain ATCC 204508 / S288c) (Baker's yeast).